Here is a 314-residue protein sequence, read N- to C-terminus: tRNA dimethylallyltransferase (314 aa).

Gly-12–Ser-19 lines the ATP pocket. Substrate is bound at residue Thr-14 to Ser-19. An interaction with substrate tRNA region spans residues Asp-37–Gln-40.

It belongs to the IPP transferase family. Monomer. Mg(2+) is required as a cofactor.

It catalyses the reaction adenosine(37) in tRNA + dimethylallyl diphosphate = N(6)-dimethylallyladenosine(37) in tRNA + diphosphate. In terms of biological role, catalyzes the transfer of a dimethylallyl group onto the adenine at position 37 in tRNAs that read codons beginning with uridine, leading to the formation of N6-(dimethylallyl)adenosine (i(6)A). In Rhodospirillum centenum (strain ATCC 51521 / SW), this protein is tRNA dimethylallyltransferase.